The chain runs to 200 residues: Glycerol-3-phosphate acyltransferase (200 aa).

Helical transmembrane passes span 8-28, 57-77, 88-108, 114-134, and 159-179; these read ALAL…GMVL, LAAA…VLAA, IAGL…FAGG, FLGI…LAWL, and FLLG…LIFW.

This sequence belongs to the PlsY family. Probably interacts with PlsX.

The protein resides in the cell inner membrane. It catalyses the reaction an acyl phosphate + sn-glycerol 3-phosphate = a 1-acyl-sn-glycero-3-phosphate + phosphate. The protein operates within lipid metabolism; phospholipid metabolism. Its function is as follows. Catalyzes the transfer of an acyl group from acyl-phosphate (acyl-PO(4)) to glycerol-3-phosphate (G3P) to form lysophosphatidic acid (LPA). This enzyme utilizes acyl-phosphate as fatty acyl donor, but not acyl-CoA or acyl-ACP. The sequence is that of Glycerol-3-phosphate acyltransferase from Roseobacter denitrificans (strain ATCC 33942 / OCh 114) (Erythrobacter sp. (strain OCh 114)).